The sequence spans 496 residues: NADH-quinone oxidoreductase subunit N (496 aa).

The next 14 helical transmembrane spans lie at 8–28 (LLST…VGLI), 37–57 (MFPL…YDFF), 73–93 (QFAG…VLST), 110–130 (LLLL…LLTM), 131–151 (YVGL…HPND), 162–182 (LVLG…IYGL), 203–223 (TILA…LVPF), 235–255 (PAPI…AALV), 271–291 (GLIL…LMAF), 300–320 (MAYS…AVSI), 341–361 (GVLF…AVIT), 386–406 (AAVL…AGFV), 421–441 (VWIA…YLSI), and 464–484 (FGMI…TPLA).

This sequence belongs to the complex I subunit 2 family. NDH-1 is composed of 14 different subunits. Subunits NuoA, H, J, K, L, M, N constitute the membrane sector of the complex.

It is found in the cell membrane. It carries out the reaction a quinone + NADH + 5 H(+)(in) = a quinol + NAD(+) + 4 H(+)(out). NDH-1 shuttles electrons from NADH, via FMN and iron-sulfur (Fe-S) centers, to quinones in the respiratory chain. The immediate electron acceptor for the enzyme in this species is believed to be a menaquinone. Couples the redox reaction to proton translocation (for every two electrons transferred, four hydrogen ions are translocated across the cytoplasmic membrane), and thus conserves the redox energy in a proton gradient. The protein is NADH-quinone oxidoreductase subunit N of Desulfitobacterium hafniense (strain DSM 10664 / DCB-2).